The chain runs to 784 residues: E3 UFM1-protein ligase 1 homolog (784 aa).

Residues 405–480 (SVSTQELEDD…RGGGAGNKKA (76 aa)) form a disordered region. Positions 444–454 (KSTKKHQRGKA) are enriched in basic residues.

It belongs to the UFL1 family.

E3 UFM1-protein ligase that mediates ufmylation of target proteins. The polypeptide is E3 UFM1-protein ligase 1 homolog (Drosophila yakuba (Fruit fly)).